Here is a 965-residue protein sequence, read N- to C-terminus: PWWP domain-containing protein 4 (965 aa).

The PWWP domain maps to 135-196; it reads VGDMVWGKVK…PAELIPFEPH (62 aa). The span at 437–455 shows a compositional bias: polar residues; it reads MNFTSSSGNIPGKKSSVSK. 4 disordered regions span residues 437–507, 526–577, 649–708, and 905–927; these read MNFT…KSSL, VVKR…KSSQ, SAKT…SLAP, and LSSQDSEPKPVNNQVDHVEPPLD. Composition is skewed to basic and acidic residues over residues 456-474 and 481-495; these read LSRDDDKGLAQESDVRMGE and DQEKFEPMKSLKQDE. The segment covering 496 to 507 has biased composition (polar residues); sequence TGTNSRSNKSSL. Residues 546 to 553 carry the Nuclear localization signal motif; that stretch reads KKKEYVSE. Over residues 549–563 the composition is skewed to basic and acidic residues; sequence EYVSELNRDTPDKRK. Polar residues predominate over residues 657–676; that stretch reads NEQSKAGRNRISSDSQQDVP. A compositionally biased stretch (basic and acidic residues) spans 691–702; the sequence is ASDKKTNQDATK. Positions 905-919 are enriched in polar residues; that stretch reads LSSQDSEPKPVNNQV.

Belongs to the PDP family. In terms of assembly, component of the PRC2 (polycomb repressive complex 2) complex which regulates histone methylation on histone H3K27.

It is found in the nucleus. Its function is as follows. May influence gene expression by regulating the function of the PRC2 complex and modulating H3K27me3 level. This chain is PWWP domain-containing protein 4, found in Arabidopsis thaliana (Mouse-ear cress).